Reading from the N-terminus, the 400-residue chain is Double C2-like domain-containing protein alpha (400 aa).

Residues 1-89 (MRGRRGDRMT…DSYDSDDATA (89 aa)) form an interaction with UNC13D and DYNLT1 region. C2 domains are found at residues 89-211 (ALGT…HFNI) and 251-384 (ERGR…ERWH). Ca(2+) is bound by residues D120, D126, D181, D183, D282, D288, D342, D344, and D350. Positions 215 to 400 (RQVPLASPSS…PPAAGALSSA (186 aa)) are interaction with UNC13D.

Interacts (via N-terminus) with UNC13A. Interacts with cytoplasmic dynein light chain DYNLT1. Interacts with UNC13D. It depends on Ca(2+) as a cofactor. As to expression, predominantly expressed in brain. Also expressed in testis.

The protein localises to the lysosome. Its subcellular location is the cytoplasmic vesicle. It localises to the secretory vesicle. It is found in the synaptic vesicle membrane. The protein resides in the synapse. The protein localises to the synaptosome. Calcium sensor which most probably regulates fusion of vesicles with membranes. Binds calcium and phospholipids. May be involved in calcium dependent neurotransmitter release through the interaction with UNC13A. May be involved in calcium-dependent spontaneous release of neurotransmitter in absence of action potentials in neuronal cells. Regulates Ca(2+)-dependent secretory lysosome exocytosis in mast cells. In Homo sapiens (Human), this protein is Double C2-like domain-containing protein alpha (DOC2A).